The chain runs to 859 residues: Rod cGMP-specific 3',5'-cyclic phosphodiesterase subunit alpha (859 aa).

Glycine 2 carries the post-translational modification N-acetylglycine. 2 GAF domains span residues 73 to 222 (QAEK…NLIM) and 254 to 431 (DIER…GWSV). The region spanning 483-816 (EEEELAEILQ…KEWKALADEY (334 aa)) is the PDEase domain. Histidine 559 serves as the catalytic Proton donor. 4 residues coordinate a divalent metal cation: histidine 563, histidine 599, aspartate 600, and aspartate 720. The segment at 823–859 (LEEEKQKQQAAKQAASGNQPGGNPLQGAPASKSCCIQ) is disordered. Cysteine methyl ester is present on cysteine 856. Cysteine 856 is lipidated: S-farnesyl cysteine. The propeptide at 857–859 (CIQ) is removed in mature form.

It belongs to the cyclic nucleotide phosphodiesterase family. In terms of assembly, oligomer composed of two catalytic chains (alpha and beta), an inhibitory chain (gamma) and the delta chain. A divalent metal cation serves as cofactor.

The protein localises to the cell membrane. Its subcellular location is the cell projection. It is found in the cilium. It localises to the photoreceptor outer segment. The catalysed reaction is 3',5'-cyclic GMP + H2O = GMP + H(+). Rod-specific cGMP phosphodiesterase that catalyzes the hydrolysis of 3',5'-cyclic GMP. This protein participates in processes of transmission and amplification of the visual signal. In Mus musculus (Mouse), this protein is Rod cGMP-specific 3',5'-cyclic phosphodiesterase subunit alpha.